A 203-amino-acid chain; its full sequence is IMP cyclohydrolase (203 aa).

It belongs to the archaeal IMP cyclohydrolase family.

The catalysed reaction is IMP + H2O = 5-formamido-1-(5-phospho-D-ribosyl)imidazole-4-carboxamide. It functions in the pathway purine metabolism; IMP biosynthesis via de novo pathway; IMP from 5-formamido-1-(5-phospho-D-ribosyl)imidazole-4-carboxamide: step 1/1. Functionally, catalyzes the cyclization of 5-formylamidoimidazole-4-carboxamide ribonucleotide to IMP. This is IMP cyclohydrolase from Methanococcus aeolicus (strain ATCC BAA-1280 / DSM 17508 / OCM 812 / Nankai-3).